The chain runs to 139 residues: Putative pre-16S rRNA nuclease (139 aa).

This sequence belongs to the YqgF nuclease family.

It localises to the cytoplasm. Its function is as follows. Could be a nuclease involved in processing of the 5'-end of pre-16S rRNA. The polypeptide is Putative pre-16S rRNA nuclease (Streptococcus sanguinis (strain SK36)).